We begin with the raw amino-acid sequence, 76 residues long: Antimicrobial peptide lumbricin-1 (76 aa).

A propeptide spans 1-14 (MSLCISDYLYLTLT) (removed in mature form).

Functionally, displays antimicrobial activity against the Gram-positive bacteria B.subtilis ATCC 62037, S.aureus ATCC 15752 and S.mutans ATCC 25175, the Gram-negative bacteria E.coli ATCC 27325, P.putida ATCC 17426 and Serratia sp. ATCC 21074, and the fungi C.albicans ATCC 10231, C.neoformans ATCC 34881 and S.cerevisiae ATCC 44774. Does not possess hemolytic activity. The sequence is that of Antimicrobial peptide lumbricin-1 from Lumbricus rubellus (Humus earthworm).